Here is a 509-residue protein sequence, read N- to C-terminus: ATP synthase subunit alpha (509 aa).

169–176 (GDRQTGKT) is an ATP binding site.

It belongs to the ATPase alpha/beta chains family. As to quaternary structure, F-type ATPases have 2 components, CF(1) - the catalytic core - and CF(0) - the membrane proton channel. CF(1) has five subunits: alpha(3), beta(3), gamma(1), delta(1), epsilon(1). CF(0) has three main subunits: a(1), b(2) and c(9-12). The alpha and beta chains form an alternating ring which encloses part of the gamma chain. CF(1) is attached to CF(0) by a central stalk formed by the gamma and epsilon chains, while a peripheral stalk is formed by the delta and b chains.

It is found in the cell inner membrane. It catalyses the reaction ATP + H2O + 4 H(+)(in) = ADP + phosphate + 5 H(+)(out). Functionally, produces ATP from ADP in the presence of a proton gradient across the membrane. The alpha chain is a regulatory subunit. This is ATP synthase subunit alpha from Brucella anthropi (strain ATCC 49188 / DSM 6882 / CCUG 24695 / JCM 21032 / LMG 3331 / NBRC 15819 / NCTC 12168 / Alc 37) (Ochrobactrum anthropi).